The chain runs to 477 residues: Bifunctional protein HldE (477 aa).

The tract at residues 1–318 is ribokinase; the sequence is MKVTLPEFER…ENAVRGRADT (318 aa). 195-198 contributes to the ATP binding site; the sequence is NLSE. Asp-264 is an active-site residue. The cytidylyltransferase stretch occupies residues 344-477; that stretch reads MTNGVFDILH…IKKIQKDSDK (134 aa).

In the N-terminal section; belongs to the carbohydrate kinase PfkB family. This sequence in the C-terminal section; belongs to the cytidylyltransferase family. In terms of assembly, homodimer.

The catalysed reaction is D-glycero-beta-D-manno-heptose 7-phosphate + ATP = D-glycero-beta-D-manno-heptose 1,7-bisphosphate + ADP + H(+). It catalyses the reaction D-glycero-beta-D-manno-heptose 1-phosphate + ATP + H(+) = ADP-D-glycero-beta-D-manno-heptose + diphosphate. Its pathway is nucleotide-sugar biosynthesis; ADP-L-glycero-beta-D-manno-heptose biosynthesis; ADP-L-glycero-beta-D-manno-heptose from D-glycero-beta-D-manno-heptose 7-phosphate: step 1/4. It participates in nucleotide-sugar biosynthesis; ADP-L-glycero-beta-D-manno-heptose biosynthesis; ADP-L-glycero-beta-D-manno-heptose from D-glycero-beta-D-manno-heptose 7-phosphate: step 3/4. Functionally, catalyzes the phosphorylation of D-glycero-D-manno-heptose 7-phosphate at the C-1 position to selectively form D-glycero-beta-D-manno-heptose-1,7-bisphosphate. In terms of biological role, catalyzes the ADP transfer from ATP to D-glycero-beta-D-manno-heptose 1-phosphate, yielding ADP-D-glycero-beta-D-manno-heptose. The polypeptide is Bifunctional protein HldE (Citrobacter koseri (strain ATCC BAA-895 / CDC 4225-83 / SGSC4696)).